We begin with the raw amino-acid sequence, 263 residues long: Uroplakin-3b-like protein 1 (263 aa).

A signal peptide spans 1–33 (MDNSWRLGPAIGLSAGQSQLLVSLLLLLTRVQP). Topologically, residues 34–204 (GTDVAAPEHI…PGPQSPGTVV (171 aa)) are extracellular. N-linked (GlcNAc...) asparagine glycosylation is found at asparagine 51, asparagine 76, and asparagine 91. Residues 205–225 (IIAILSILLAVLLTVLLAVLI) form a helical membrane-spanning segment. At 226-263 (YTCFNSCRSTSLSGPEEAGSVRRYTTHLAFSTPAEGAS) the chain is on the cytoplasmic side.

Belongs to the uroplakin-3 family.

It is found in the membrane. The polypeptide is Uroplakin-3b-like protein 1 (Homo sapiens (Human)).